The chain runs to 105 residues: Protein RALF-like 21 (105 aa).

Residues 1 to 30 (MSNMKITNRFMLVATFIACVFISSMNMTVG) form the signal peptide. 2 disulfide bridges follow: Cys44–Cys53 and Cys67–Cys73.

This sequence belongs to the plant rapid alkalinization factor (RALF) family. As to expression, expressed in seeds and rosettes.

Its subcellular location is the secreted. In terms of biological role, cell signaling peptide that may regulate plant stress, growth, and development. Mediates a rapid alkalinization of extracellular space by mediating a transient increase in the cytoplasmic Ca(2+) concentration leading to a calcium-dependent signaling events through a cell surface receptor and a concomitant activation of some intracellular mitogen-activated protein kinases. This Arabidopsis thaliana (Mouse-ear cress) protein is Protein RALF-like 21 (RALFL21).